The chain runs to 210 residues: Pyridoxine/pyridoxamine 5'-phosphate oxidase (210 aa).

Substrate is bound by residues 7–10 (REDY) and lysine 65. FMN is bound by residues 60-65 (RMVLLK), 75-76 (FT), arginine 81, lysine 82, and glutamine 104. The substrate site is built by tyrosine 122, arginine 126, and serine 130. FMN contacts are provided by residues 139–140 (QS) and tryptophan 183. 189 to 191 (RLH) serves as a coordination point for substrate. Residue arginine 193 participates in FMN binding.

This sequence belongs to the pyridoxamine 5'-phosphate oxidase family. Homodimer. Requires FMN as cofactor.

The catalysed reaction is pyridoxamine 5'-phosphate + O2 + H2O = pyridoxal 5'-phosphate + H2O2 + NH4(+). It carries out the reaction pyridoxine 5'-phosphate + O2 = pyridoxal 5'-phosphate + H2O2. Its pathway is cofactor metabolism; pyridoxal 5'-phosphate salvage; pyridoxal 5'-phosphate from pyridoxamine 5'-phosphate: step 1/1. It participates in cofactor metabolism; pyridoxal 5'-phosphate salvage; pyridoxal 5'-phosphate from pyridoxine 5'-phosphate: step 1/1. In terms of biological role, catalyzes the oxidation of either pyridoxine 5'-phosphate (PNP) or pyridoxamine 5'-phosphate (PMP) into pyridoxal 5'-phosphate (PLP). The polypeptide is Pyridoxine/pyridoxamine 5'-phosphate oxidase (Neisseria gonorrhoeae (strain ATCC 700825 / FA 1090)).